Reading from the N-terminus, the 61-residue chain is MFDNALLSLSHEQQQQAVEKIQVLMQRGMSSGEAIALVAKELREAHDNEKINSEKTKSAEK.

It belongs to the UPF0181 family.

The chain is UPF0181 protein MS1074 from Mannheimia succiniciproducens (strain KCTC 0769BP / MBEL55E).